The sequence spans 92 residues: uncharacterized protein (92 aa).

Residues 65–86 (AVWIFWLCFLVSGLSRAFLVYF) form a helical membrane-spanning segment.

Its subcellular location is the membrane. This is an uncharacterized protein from Treponema pallidum (strain Nichols).